A 110-amino-acid chain; its full sequence is PHD finger-like domain-containing protein 5A (110 aa).

A2 carries the post-translational modification N-acetylalanine. K3 is subject to N6-acetyllysine. Residues C11, C23, C26, C30, C33, C46, C49, C58, C61, C72, and C75 each coordinate Zn(2+). The interaction with SF3B1 and SF3B3 stretch occupies residues 35-51 (SYVRPCTLVRICDECNY). An interaction with SF3B3 region spans residues 79 to 82 (EKDR). C85 provides a ligand contact to Zn(2+). At S94 the chain carries Phosphoserine.

The protein belongs to the PHF5 family. In terms of assembly, component of the 17S U2 SnRNP complex, a ribonucleoprotein complex that contains small nuclear RNA (snRNA) U2 and a number of specific proteins. Part of the SF3B subcomplex of the 17S U2 SnRNP complex. SF3B associates with the splicing subcomplex SF3A and a 12S RNA unit to form the U2 small nuclear ribonucleoproteins complex (U2 snRNP). Within the SF3B complex interacts directly with SF3B1 and SF3B3. Component of the minor spliceosome, which splices U12-type introns. Within this complex, interacts with CRIPT. Interacts (via N-terminus) with U2AF1 and SRSF5; acts to bridge the two. Interacts (via C-terminus) with EP400 and DDX1; acts to bridge the two. Interacts with the PAF1 complex (PAF1C) composed of CDC73, PAF1, LEO1, CTR9, RTF1 and SKIC8. Within the PAF1C interacts directly with CDC73 and SKIC8. Interacts with RNA polymerase II. Expressed in primary spermatocytes (at protein level). Ubiquitously expressed in pre- and postnatal tissues. Highly expressed in pluripotent embryonic stem cells (ESCs) (at protein level) and induced pluripotent stem cells (iPSCs).

It localises to the nucleus. Its subcellular location is the nucleus speckle. Its function is as follows. Component of the 17S U2 SnRNP complex of the spliceosome, a large ribonucleoprotein complex that removes introns from transcribed pre-mRNAs. The 17S U2 SnRNP complex (1) directly participates in early spliceosome assembly and (2) mediates recognition of the intron branch site during pre-mRNA splicing by promoting the selection of the pre-mRNA branch-site adenosine, the nucleophile for the first step of splicing. Within the 17S U2 SnRNP complex, PHF5A is part of the SF3B subcomplex, which is required for 'A' complex assembly formed by the stable binding of U2 snRNP to the branchpoint sequence in pre-mRNA. Sequence independent binding of SF3A and SF3B subcomplexes upstream of the branch site is essential, it may anchor U2 snRNP to the pre-mRNA. Also acts as a component of the minor spliceosome, which is involved in the splicing of U12-type introns in pre-mRNAs. Also involved in elongation by RNA polymerase II as part of the PAF1 complex (PAF1C). PAF1C is required for maintenance of embryonic stem cell (ESC) self-renewal and cellular reprogramming of stem cells. Maintains pluripotency by recruiting and stabilizing PAF1C on pluripotency genes loci, and by regulating the expression of the pluripotency genes. Regulates the deposition of elongation-associated histone modifications, including dimethylated histone H3 'Lys-79' (H3K79me2) and trimethylated histone H3 'Lys-36' (H3K36me3), on PAF1C targets, self-renewal and pluripotency genes. Regulates RNA polymerase II promoter-proximal pause release of the PAF1C targets and self-renewal genes, and the levels of elongating ('Ser-2' phosphorylated) RNA polymerase II in their gene bodies. Regulates muscle specification in adult stem cells by stabilizing PAF1C in chromatin to promote myogenic differentiation. Acts as a transcriptional regulator by binding to the GJA1/Cx43 promoter and enhancing its up-regulation by ESR1/ER-alpha. In Mus musculus (Mouse), this protein is PHD finger-like domain-containing protein 5A (Phf5a).